The following is a 247-amino-acid chain: UDP-2,3-diacylglucosamine hydrolase (247 aa).

Mn(2+) is bound by residues Asp8, His10, Asp41, Asn79, and His114. Position 79–80 (79–80 (NR)) interacts with substrate. Asp122, Ser160, Asp171, Arg174, and His202 together coordinate substrate. His202 and His204 together coordinate Mn(2+).

This sequence belongs to the LpxH family. Mn(2+) is required as a cofactor.

It localises to the cell inner membrane. The enzyme catalyses UDP-2-N,3-O-bis[(3R)-3-hydroxytetradecanoyl]-alpha-D-glucosamine + H2O = 2-N,3-O-bis[(3R)-3-hydroxytetradecanoyl]-alpha-D-glucosaminyl 1-phosphate + UMP + 2 H(+). It functions in the pathway glycolipid biosynthesis; lipid IV(A) biosynthesis; lipid IV(A) from (3R)-3-hydroxytetradecanoyl-[acyl-carrier-protein] and UDP-N-acetyl-alpha-D-glucosamine: step 4/6. Its function is as follows. Hydrolyzes the pyrophosphate bond of UDP-2,3-diacylglucosamine to yield 2,3-diacylglucosamine 1-phosphate (lipid X) and UMP by catalyzing the attack of water at the alpha-P atom. Involved in the biosynthesis of lipid A, a phosphorylated glycolipid that anchors the lipopolysaccharide to the outer membrane of the cell. The chain is UDP-2,3-diacylglucosamine hydrolase from Xanthomonas axonopodis pv. citri (strain 306).